A 560-amino-acid polypeptide reads, in one-letter code: Dihydroxy-acid dehydratase (560 aa).

Positions 1–20 (MGDNLKKRSSMTTDGDNRAP) are disordered. Cysteine 52 is a binding site for [2Fe-2S] cluster. Aspartate 84 is a binding site for Mg(2+). Cysteine 125 serves as a coordination point for [2Fe-2S] cluster. Mg(2+) contacts are provided by aspartate 126 and lysine 127. Lysine 127 is subject to N6-carboxylysine. A [2Fe-2S] cluster-binding site is contributed by cysteine 197. Glutamate 448 is a Mg(2+) binding site. The Proton acceptor role is filled by serine 474.

Belongs to the IlvD/Edd family. In terms of assembly, homodimer. The cofactor is [2Fe-2S] cluster. Mg(2+) is required as a cofactor.

It carries out the reaction (2R)-2,3-dihydroxy-3-methylbutanoate = 3-methyl-2-oxobutanoate + H2O. The catalysed reaction is (2R,3R)-2,3-dihydroxy-3-methylpentanoate = (S)-3-methyl-2-oxopentanoate + H2O. Its pathway is amino-acid biosynthesis; L-isoleucine biosynthesis; L-isoleucine from 2-oxobutanoate: step 3/4. The protein operates within amino-acid biosynthesis; L-valine biosynthesis; L-valine from pyruvate: step 3/4. Functions in the biosynthesis of branched-chain amino acids. Catalyzes the dehydration of (2R,3R)-2,3-dihydroxy-3-methylpentanoate (2,3-dihydroxy-3-methylvalerate) into 2-oxo-3-methylpentanoate (2-oxo-3-methylvalerate) and of (2R)-2,3-dihydroxy-3-methylbutanoate (2,3-dihydroxyisovalerate) into 2-oxo-3-methylbutanoate (2-oxoisovalerate), the penultimate precursor to L-isoleucine and L-valine, respectively. The protein is Dihydroxy-acid dehydratase of Leptospira interrogans serogroup Icterohaemorrhagiae serovar copenhageni (strain Fiocruz L1-130).